The sequence spans 424 residues: Anaerobic glycerol-3-phosphate dehydrogenase subunit B (424 aa).

Belongs to the anaerobic G-3-P dehydrogenase subunit B family. As to quaternary structure, composed of a catalytic GlpA/B dimer and of membrane bound GlpC. Requires FMN as cofactor.

The catalysed reaction is a quinone + sn-glycerol 3-phosphate = dihydroxyacetone phosphate + a quinol. It participates in polyol metabolism; glycerol degradation via glycerol kinase pathway; glycerone phosphate from sn-glycerol 3-phosphate (anaerobic route): step 1/1. Its function is as follows. Conversion of glycerol 3-phosphate to dihydroxyacetone. Uses fumarate or nitrate as electron acceptor. The polypeptide is Anaerobic glycerol-3-phosphate dehydrogenase subunit B (Yersinia pseudotuberculosis serotype I (strain IP32953)).